Reading from the N-terminus, the 182-residue chain is Small ribosomal subunit protein uS4c (182 aa).

An S4 RNA-binding domain is found at 82–143; that stretch reads MRLDNILFRL…KQRSKALIQN (62 aa).

This sequence belongs to the universal ribosomal protein uS4 family. In terms of assembly, part of the 30S ribosomal subunit. Contacts protein S5. The interaction surface between S4 and S5 is involved in control of translational fidelity.

The protein resides in the plastid. It is found in the chloroplast. Its function is as follows. One of the primary rRNA binding proteins, it binds directly to 16S rRNA where it nucleates assembly of the body of the 30S subunit. Functionally, with S5 and S12 plays an important role in translational accuracy. The protein is Small ribosomal subunit protein uS4c (rps4) of Iris domestica (Leopard lily).